Consider the following 392-residue polypeptide: Tryptophan synthase beta chain (392 aa).

K84 is subject to N6-(pyridoxal phosphate)lysine.

The protein belongs to the TrpB family. Tetramer of two alpha and two beta chains. It depends on pyridoxal 5'-phosphate as a cofactor.

The catalysed reaction is (1S,2R)-1-C-(indol-3-yl)glycerol 3-phosphate + L-serine = D-glyceraldehyde 3-phosphate + L-tryptophan + H2O. It functions in the pathway amino-acid biosynthesis; L-tryptophan biosynthesis; L-tryptophan from chorismate: step 5/5. The beta subunit is responsible for the synthesis of L-tryptophan from indole and L-serine. The chain is Tryptophan synthase beta chain (trpB) from Chlamydia trachomatis serovar D (strain ATCC VR-885 / DSM 19411 / UW-3/Cx).